The sequence spans 282 residues: MSKEVSEEPEHVRPKDYTDPPPAPLFDVGELRLWSFYRALIAEFIATLLFLYITVATVIGYKVQSSADQCGGVGTLGIAWAFGGMIFILVYCTAGISGGHINPAVTFGLLLARKVSVIRAVMYIVAQCLGGIVGVGIVKGIMKHQYNANGGGANMVASGYSTGTALGAEIIGTFVLVYTVFSATDPKRNARDSHVPVLAPLPIGFAVFMVHLATIPITGTGINPARSIGAAVIYNQKKAWDDHWIFWAGPFIGALAAAAYHQYILRAAAIKALGSFRSNPSN.

2 helical membrane-spanning segments follow: residues 39 to 59 and 76 to 96; these read ALIA…ATVI and LGIA…TAGI. An NPA 1 motif is present at residues 102-104; that stretch reads NPA. 3 consecutive transmembrane segments (helical) span residues 121–141, 163–183, and 197–217; these read VMYI…VKGI, GTAL…VFSA, and VLAP…TIPI. The NPA 2 motif lies at 223–225; the sequence is NPA. A helical membrane pass occupies residues 245–265; the sequence is IFWAGPFIGALAAAAYHQYIL.

Belongs to the MIP/aquaporin (TC 1.A.8) family. PIP (TC 1.A.8.11) subfamily. As to expression, expressed in roots and leaves.

The protein resides in the cell membrane. Aquaporins facilitate the transport of water and small neutral solutes across cell membranes. The chain is Probable aquaporin PIP2-6 (PIP2-6) from Oryza sativa subsp. japonica (Rice).